Consider the following 344-residue polypeptide: Ferrochelatase (344 aa).

Fe cation contacts are provided by His196 and Glu277.

It belongs to the ferrochelatase family.

The protein localises to the cytoplasm. The catalysed reaction is heme b + 2 H(+) = protoporphyrin IX + Fe(2+). The protein operates within porphyrin-containing compound metabolism; protoheme biosynthesis; protoheme from protoporphyrin-IX: step 1/1. Functionally, catalyzes the ferrous insertion into protoporphyrin IX. This Synechococcus sp. (strain JA-2-3B'a(2-13)) (Cyanobacteria bacterium Yellowstone B-Prime) protein is Ferrochelatase.